Consider the following 276-residue polypeptide: NAD kinase (276 aa).

The active-site Proton acceptor is the Asp61. NAD(+) is bound by residues 61-62 (DG), 134-135 (ND), Arg145, Lys162, Asp164, Val172, 175-180 (TAYSFS), and Gln234.

The protein belongs to the NAD kinase family. The cofactor is a divalent metal cation.

It is found in the cytoplasm. It catalyses the reaction NAD(+) + ATP = ADP + NADP(+) + H(+). Its function is as follows. Involved in the regulation of the intracellular balance of NAD and NADP, and is a key enzyme in the biosynthesis of NADP. Catalyzes specifically the phosphorylation on 2'-hydroxyl of the adenosine moiety of NAD to yield NADP. The protein is NAD kinase of Clostridium perfringens (strain ATCC 13124 / DSM 756 / JCM 1290 / NCIMB 6125 / NCTC 8237 / Type A).